Reading from the N-terminus, the 429-residue chain is Enolase (429 aa).

Q162 contributes to the (2R)-2-phosphoglycerate binding site. E204 acts as the Proton donor in catalysis. Mg(2+)-binding residues include D241, E283, and D310. (2R)-2-phosphoglycerate-binding residues include K335, R364, S365, and K386. The active-site Proton acceptor is the K335.

It belongs to the enolase family. It depends on Mg(2+) as a cofactor.

It is found in the cytoplasm. The protein resides in the secreted. Its subcellular location is the cell surface. It carries out the reaction (2R)-2-phosphoglycerate = phosphoenolpyruvate + H2O. It participates in carbohydrate degradation; glycolysis; pyruvate from D-glyceraldehyde 3-phosphate: step 4/5. In terms of biological role, catalyzes the reversible conversion of 2-phosphoglycerate (2-PG) into phosphoenolpyruvate (PEP). It is essential for the degradation of carbohydrates via glycolysis. The protein is Enolase of Mycobacterium avium (strain 104).